The sequence spans 140 residues: Sperm protein associated with the nucleus on the X chromosome N3 (140 aa).

Composition is skewed to polar residues over residues 1–20 (MEQP…CKSN), 62–79 (INSN…SINP), and 131–140 (EGSSQDSGED). The tract at residues 1 to 140 (MEQPTSSTNG…EGSSQDSGED (140 aa)) is disordered.

Belongs to the SPAN-X family.

The protein is Sperm protein associated with the nucleus on the X chromosome N3 (SPANXN3) of Pan troglodytes (Chimpanzee).